We begin with the raw amino-acid sequence, 1168 residues long: Transcription-repair-coupling factor (1168 aa).

In terms of domain architecture, Helicase ATP-binding spans 633–794; sequence DMQKSRPMDR…MLGVRDLSVI (162 aa). 646-653 contributes to the ATP binding site; it reads GDVGYGKT. Residues 747–750 carry the DEEQ box motif; that stretch reads DEEQ. One can recognise a Helicase C-terminal domain in the interval 808-969; that stretch reads VLEQNMSFIK…GFKIAMRDLN (162 aa).

The protein in the N-terminal section; belongs to the UvrB family. It in the C-terminal section; belongs to the helicase family. RecG subfamily.

The protein resides in the cytoplasm. Couples transcription and DNA repair by recognizing RNA polymerase (RNAP) stalled at DNA lesions. Mediates ATP-dependent release of RNAP and its truncated transcript from the DNA, and recruitment of nucleotide excision repair machinery to the damaged site. In Staphylococcus aureus (strain MRSA252), this protein is Transcription-repair-coupling factor.